We begin with the raw amino-acid sequence, 361 residues long: Basic helix-loop-helix protein 79 (361 aa).

The tract at residues 66 to 159 is disordered; that stretch reads APEASNGSGS…ASTVTAGQKT (94 aa). Positions 124 to 138 are enriched in basic and acidic residues; sequence GRPERARPGAKKKAE. Positions 146–157 are enriched in polar residues; sequence PATSASTVTAGQ. The Nuclear localization signal motif lies at 166-173; the sequence is ARRGQATD. Residues 170 to 183 are basic motif; degenerate; the sequence is QATDSHSLAERVRR. The bHLH domain occupies 170 to 220; it reads QATDSHSLAERVRRERISERMRYLQELVPGCNKVTGKAGMLDEIINYVQSL. Positions 184-220 are helix-loop-helix motif; sequence ERISERMRYLQELVPGCNKVTGKAGMLDEIINYVQSL.

It belongs to the bHLH protein family. Homodimer. Interacts with IBH1.

It localises to the nucleus. Functionally, together with BCL1, positive regulator of cell elongation at least partially through increased gibberellic acid (GA) biosynthesis. In Oryza sativa subsp. indica (Rice), this protein is Basic helix-loop-helix protein 79.